The primary structure comprises 432 residues: MAAPVGAQARKLLRDLVLRPPLLAARSQVVQLTSRRWLNLQEYQSKKLMSDNGVKVQRFFVADTANEALEAAKRLNAKEIVLKAQILAGGRGKGVFSSGLKGGVHLTKDPKVVGQLAKQMIGYNLATKQTPKEGVKVKKVMVAEALDISRETYLAILMDRSCNGPVLVGSPQGGVDIEEVAASNPELIFKEQIDIIEGIKDSQAQRMAENLGFLGPLKNQAADQIKKLYNLFLKIDATQVEVNPFGETPEGQVVCFDAKINFDDNAEFRQKDIFAMDDKSENEPIENEAARYDLKYIGLDGNIACFVNGAGLAMATCDIIFLNGGKPANFLDLGGGVKESQVYQAFKLLTADPKVEAILVNIFGGIVNCAIIANGITKACRELELKVPLVVRLEGTNVHEAQNILSNSGLPITSAVDLEDAAKKAVASVAKK.

Residues 1 to 37 (MAAPVGAQARKLLRDLVLRPPLLAARSQVVQLTSRRW) constitute a mitochondrion transit peptide. In terms of domain architecture, ATP-grasp spans 46–274 (KKLMSDNGVK…NAEFRQKDIF (229 aa)). Gln57 contributes to the GTP binding site. Lys73 bears the N6-acetyllysine mark. Lys78 carries the post-translational modification N6-succinyllysine. GTP is bound at residue 90–92 (GRG). N6-acetyllysine occurs at positions 111, 132, and 139. GTP is bound at residue Leu146. A Phosphoserine modification is found at Ser161. 3 positions are modified to N6-acetyllysine: Lys200, Lys218, and Lys227. The Mg(2+) site is built by Asn243 and Asp257. Lys271 bears the N6-acetyllysine mark. Asn308 contributes to the substrate binding site. The residue at position 338 (Lys338) is an N6-succinyllysine. Position 347 is an N6-acetyllysine (Lys347). Position 365 to 367 (365 to 367 (GIV)) interacts with substrate. An N6-acetyllysine mark is found at Lys386 and Lys423.

The protein belongs to the succinate/malate CoA ligase beta subunit family. GTP-specific subunit beta subfamily. As to quaternary structure, heterodimer of an alpha and a beta subunit. The beta subunit determines specificity for GTP. It depends on Mg(2+) as a cofactor.

It is found in the mitochondrion. The catalysed reaction is GTP + succinate + CoA = succinyl-CoA + GDP + phosphate. It functions in the pathway carbohydrate metabolism; tricarboxylic acid cycle; succinate from succinyl-CoA (ligase route): step 1/1. In terms of biological role, GTP-specific succinyl-CoA synthetase functions in the citric acid cycle (TCA), coupling the hydrolysis of succinyl-CoA to the synthesis of GTP and thus represents the only step of substrate-level phosphorylation in the TCA. The beta subunit provides nucleotide specificity of the enzyme and binds the substrate succinate, while the binding sites for coenzyme A and phosphate are found in the alpha subunit. This chain is Succinate--CoA ligase [GDP-forming] subunit beta, mitochondrial, found in Bos taurus (Bovine).